The sequence spans 280 residues: Undecaprenyl-diphosphatase (280 aa).

Helical transmembrane passes span 1-21 (MEWI…FLPI), 40-60 (GAAF…VFFW), 89-109 (WLVV…QNAI), 116-136 (LWIV…ADAV), 146-166 (LTVK…IPGV), 191-211 (FLLA…KIVA), 227-247 (LATV…LKFI), and 260-280 (IALG…ATLS).

It belongs to the UppP family.

It localises to the cell membrane. It catalyses the reaction di-trans,octa-cis-undecaprenyl diphosphate + H2O = di-trans,octa-cis-undecaprenyl phosphate + phosphate + H(+). Functionally, catalyzes the dephosphorylation of undecaprenyl diphosphate (UPP). Confers resistance to bacitracin. In Renibacterium salmoninarum (strain ATCC 33209 / DSM 20767 / JCM 11484 / NBRC 15589 / NCIMB 2235), this protein is Undecaprenyl-diphosphatase.